The chain runs to 182 residues: MLVLVLGDLHIPHRCNTLPAKFKKLLVPGKIQHILCTGNLCTKESYDYLKTLAGDVHIVRGDFDENLNYPEQKVVTVGQFKIGLIHGHQVIPWGDMASLALLQRQLDVDILISGHTHKFEAFENENKFYINPGSATGAYSALESNITPSFVLMDIQASTVVTYVYQLIGDDVKVERIEYKKS.

The protein belongs to the VPS29 family. As to quaternary structure, component of the commander complex consisting of the CCC subcomplex and the retriever subcomplex. Component of the heterotrimeric retriever complex formed by vps26c, vps29 and vps35l; within the complex interacts with vps35l. Component of the heterotrimeric retromer cargo-selective complex (CSC), also described as vacuolar protein sorting subcomplex (VPS), formed by vps26 (vps26a or vps26b), vps29 and vps35. The CSC has a highly elongated structure with vps26 and vps29 binding independently at opposite distal ends of vps35 as central platform.

Its subcellular location is the cytoplasm. It is found in the membrane. The protein resides in the endosome membrane. Its function is as follows. Component of the commander complex that is essential for endosomal recycling of transmembrane cargos; the commander complex is composed of the CCC subcomplex and the retriever subcomplex. Component of the retriever complex, which is a heterotrimeric complex related to retromer cargo-selective complex (CSC) and essential for retromer-independent retrieval and recycling of numerous cargos. Component of the retromer cargo-selective complex (CSC). The CSC is believed to be the core functional component of retromer or respective retromer complex variants acting to prevent missorting of selected transmembrane cargo proteins into the lysosomal degradation pathway. In the endosomes, retriever complex drives the retrieval and recycling of NxxY-motif-containing cargo proteins by coupling to snx17, a cargo essential for the homeostatic maintenance of numerous cell surface proteins associated with processes that include cell migration, cell adhesion, nutrient supply and cell signaling. The recruitment of the retriever complex to the endosomal membrane involves CCC and WASH complexes. The sequence is that of Vacuolar protein sorting-associated protein 29 (vps29) from Danio rerio (Zebrafish).